The following is a 145-amino-acid chain: Trafficking protein particle complex subunit 1 (145 aa).

Belongs to the TRAPP small subunits family. BET5 subfamily. Part of the multisubunit transport protein particle (TRAPP) complex. The heterodimer TRAPPC6B-TRAPPC3 interacts with TRAPPC1 likely providing a core for TRAPP complex formation.

Its subcellular location is the golgi apparatus. The protein localises to the cis-Golgi network. It localises to the endoplasmic reticulum. Functionally, may play a role in vesicular transport from endoplasmic reticulum to Golgi. In Bos taurus (Bovine), this protein is Trafficking protein particle complex subunit 1 (TRAPPC1).